Reading from the N-terminus, the 219-residue chain is Cytidylate kinase (219 aa).

Gly21–Thr29 is a binding site for ATP.

It belongs to the cytidylate kinase family. Type 1 subfamily.

The protein localises to the cytoplasm. The catalysed reaction is CMP + ATP = CDP + ADP. It catalyses the reaction dCMP + ATP = dCDP + ADP. This Rickettsia conorii (strain ATCC VR-613 / Malish 7) protein is Cytidylate kinase.